The sequence spans 374 residues: Pectate lyase 1 (374 aa).

Residues 1-22 form the signal peptide; the sequence is MKYLLPSAAAGLLLLAAQPTMA. C93 and C176 are oxidised to a cystine. 4 residues coordinate Ca(2+): D150, D152, E187, and D191. Residue R239 is part of the active site. A disulfide bond links C350 and C373.

It belongs to the polysaccharide lyase 1 family. PLADES subfamily. The cofactor is Ca(2+).

The protein resides in the secreted. It catalyses the reaction Eliminative cleavage of (1-&gt;4)-alpha-D-galacturonan to give oligosaccharides with 4-deoxy-alpha-D-galact-4-enuronosyl groups at their non-reducing ends.. The protein operates within glycan metabolism; pectin degradation; 2-dehydro-3-deoxy-D-gluconate from pectin: step 2/5. In terms of biological role, involved in maceration and soft-rotting of plant tissue. This Pectobacterium atrosepticum (strain SCRI 1043 / ATCC BAA-672) (Erwinia carotovora subsp. atroseptica) protein is Pectate lyase 1 (pel1).